The chain runs to 241 residues: Probable transcriptional regulatory protein Daro_4067 (241 aa).

A disordered region spans residues 1-22; the sequence is MAGHSKWANIQHRKGRQDEKRG.

This sequence belongs to the TACO1 family.

The protein resides in the cytoplasm. The sequence is that of Probable transcriptional regulatory protein Daro_4067 from Dechloromonas aromatica (strain RCB).